A 144-amino-acid chain; its full sequence is Macromomycin (144 aa).

The first 32 residues, 1 to 32, serve as a signal peptide directing secretion; the sequence is MLQNTSRFLARAGATVGVAAGLAFSLPADRDG. 2 disulfides stabilise this stretch: Cys-68–Cys-78 and Cys-120–Cys-125.

This sequence belongs to the neocarzinostatin family.

In terms of biological role, binds non-covalently to a chromophore which is the cytotoxic and mutagenic component of the antibiotic. The chromophore binds to DNA as a weak intercalator and causes single- and double-strand breaks. This Streptomyces macromomyceticus protein is Macromomycin.